The sequence spans 715 residues: Fatty acid oxidation complex subunit alpha (715 aa).

Residues 1–189 form an enoyl-CoA hydratase/isomerase region; it reads MIYQGETLTV…KVGAIDAVVA (189 aa). D296 is a substrate binding site. The segment at 311-715 is 3-hydroxyacyl-CoA dehydrogenase; the sequence is AKATSHAAVL…EMAAQGKTFY (405 aa). Residues M325, D344, 401–403, K408, and S430 contribute to the NAD(+) site; that span reads VVE. The active-site For 3-hydroxyacyl-CoA dehydrogenase activity is H451. Residue N454 coordinates NAD(+). Positions 501 and 661 each coordinate substrate.

This sequence in the N-terminal section; belongs to the enoyl-CoA hydratase/isomerase family. In the C-terminal section; belongs to the 3-hydroxyacyl-CoA dehydrogenase family. As to quaternary structure, heterotetramer of two alpha chains (FadB) and two beta chains (FadA).

The catalysed reaction is a (3S)-3-hydroxyacyl-CoA + NAD(+) = a 3-oxoacyl-CoA + NADH + H(+). The enzyme catalyses a (3S)-3-hydroxyacyl-CoA = a (2E)-enoyl-CoA + H2O. It catalyses the reaction a 4-saturated-(3S)-3-hydroxyacyl-CoA = a (3E)-enoyl-CoA + H2O. It carries out the reaction (3S)-3-hydroxybutanoyl-CoA = (3R)-3-hydroxybutanoyl-CoA. The catalysed reaction is a (3Z)-enoyl-CoA = a 4-saturated (2E)-enoyl-CoA. The enzyme catalyses a (3E)-enoyl-CoA = a 4-saturated (2E)-enoyl-CoA. It functions in the pathway lipid metabolism; fatty acid beta-oxidation. In terms of biological role, involved in the aerobic and anaerobic degradation of long-chain fatty acids via beta-oxidation cycle. Catalyzes the formation of 3-oxoacyl-CoA from enoyl-CoA via L-3-hydroxyacyl-CoA. It can also use D-3-hydroxyacyl-CoA and cis-3-enoyl-CoA as substrate. In Aeromonas hydrophila subsp. hydrophila (strain ATCC 7966 / DSM 30187 / BCRC 13018 / CCUG 14551 / JCM 1027 / KCTC 2358 / NCIMB 9240 / NCTC 8049), this protein is Fatty acid oxidation complex subunit alpha.